The primary structure comprises 494 residues: Folate-biopterin transporter (494 aa).

A run of 12 helical transmembrane segments spans residues 31-51 (APSW…VLGL), 64-84 (LGLS…PWIL), 104-124 (SYLW…AAWV), 133-153 (VLLF…SLVV), 170-190 (LTWG…GALL), 197-217 (TVFA…FLIS), 246-266 (ILLP…ESAF), 284-303 (VRLV…QRFL), 310-330 (VIMG…LILI), 346-366 (LGDS…VLVL), 375-395 (IEAT…VLSF), and 415-435 (LALL…FLGL). Residues 441–461 (PQVKDKTEKEDNPDDPGDRLV) are disordered.

This sequence belongs to the major facilitator superfamily. Folate-biopterin transporter (TC 2.A.71) family.

The protein resides in the cell membrane. Mediates folate monoglutamate transport involved in tetrahydrofolate biosynthesis. It also mediates transport of antifolates, such as methotrexate and aminopterin. The protein is Folate-biopterin transporter of Synechocystis sp. (strain ATCC 27184 / PCC 6803 / Kazusa).